A 61-amino-acid chain; its full sequence is Small ribosomal subunit protein uS14 (61 aa).

Residues Cys24, Cys27, Cys40, and Cys43 each contribute to the Zn(2+) site.

This sequence belongs to the universal ribosomal protein uS14 family. Zinc-binding uS14 subfamily. Part of the 30S ribosomal subunit. Contacts proteins S3 and S10. Zn(2+) is required as a cofactor.

In terms of biological role, binds 16S rRNA, required for the assembly of 30S particles and may also be responsible for determining the conformation of the 16S rRNA at the A site. In Clostridium botulinum (strain ATCC 19397 / Type A), this protein is Small ribosomal subunit protein uS14.